Consider the following 167-residue polypeptide: EF-hand calcium-binding domain-containing protein 11 (167 aa).

3 consecutive EF-hand domains span residues 17–52, 91–126, and 127–162; these read AERK…LFGY, DPYE…VAPR, and LQER…GLAN. Ca(2+)-binding residues include Asp-140, Asp-142, Asp-144, His-146, and Asp-151.

This Danio rerio (Zebrafish) protein is EF-hand calcium-binding domain-containing protein 11 (efcab11).